Consider the following 421-residue polypeptide: ATP-dependent RNA helicase RhlB (421 aa).

A Q motif motif is present at residues Gln9–Ala37. The Helicase ATP-binding domain maps to Leu40–Val219. Position 53–60 (Ala53–Thr60) interacts with ATP. Positions Asp165–Asp168 match the DEAD box motif. A Helicase C-terminal domain is found at Arg245–Met390. Residues Pro396–Gly421 are disordered. Low complexity predominate over residues Ser402 to Pro414.

This sequence belongs to the DEAD box helicase family. RhlB subfamily. As to quaternary structure, component of the RNA degradosome, which is a multiprotein complex involved in RNA processing and mRNA degradation.

The protein resides in the cytoplasm. The enzyme catalyses ATP + H2O = ADP + phosphate + H(+). Functionally, DEAD-box RNA helicase involved in RNA degradation. Has RNA-dependent ATPase activity and unwinds double-stranded RNA. The chain is ATP-dependent RNA helicase RhlB from Salmonella paratyphi A (strain AKU_12601).